Here is a 349-residue protein sequence, read N- to C-terminus: Protein AMBP (349 aa).

An N-terminal signal peptide occupies residues 1–19; the sequence is MLGLGTLFLLLAACPASRA. An N-linked (GlcNAc...) asparagine glycan is attached at Asn35. 2 residues coordinate 3-hydroxy-L-kynurenine: Cys52 and Lys110. Cysteines 90 and 187 form a disulfide. Asn114 carries N-linked (GlcNAc...) asparagine glycosylation. The 3-hydroxy-L-kynurenine site is built by Lys136 and Lys148. O-linked (Xyl...) (chondroitin sulfate) serine glycosylation occurs at Ser214. 6 disulfide bridges follow: Cys230–Cys280, Cys239–Cys263, Cys255–Cys276, Cys286–Cys336, Cys295–Cys319, and Cys311–Cys332. BPTI/Kunitz inhibitor domains follow at residues 230–280 and 286–336; these read CQLS…LQTC and CSLP…KEYC.

This sequence in the N-terminal section; belongs to the calycin superfamily. Lipocalin family. Monomer. Homodimer. In plasma, it occurs as a monomer or dimer and in covalently-linked complexes with immunoglobulin A (IgA), ALB/albumin and F2/prothrombin. Chromophore-bound alpha-1-microglobulin interacts with the constant region of immunoglobulin A. Chromophore-bound alpha-1-microglobulin interacts with ALB with molar ratio 2:1 and 1:1; this interaction does not prevent fatty acid binding to ALB. Interacts with F2/prothrombin (via N-terminus) with molar ratio 2:1 and 1:1; this interaction does not prevent the activation of prothrombin to thrombin. Interacts with NDUFAB1, a subunit of mitochondrial complex I. Interacts with FN1. In terms of assembly, I-alpha-I plasma protease inhibitors are assembled from one or two heavy chains (HC) and one light chain, bikunin. Inter-alpha-inhibitor (I-alpha-I) is composed of ITIH1/HC1, ITIH2/HC2 and bikunin, and pre-alpha-inhibitor (P-alpha-I) of ITIH3/HC3 and bikunin. Interacts with TNFAIP6 (via Link domain). As to quaternary structure, monomer. Also occurs as a complex with tryptase in mast cells. The precursor is proteolytically processed into separately functioning proteins. In terms of processing, 3-hydroxykynurenine, an oxidized tryptophan metabolite that is common in biological fluids, reacts with Cys-53, Lys-111, Lys-137, and Lys-149 to form heterogeneous polycyclic chromophores including hydroxanthommatin. The reaction by alpha-1-microglobulin is autocatalytic; the human protein forms chromophore even when expressed in insect and bacterial cells. The chromophore can react with accessible cysteines forming non-reducible thioether cross-links with other molecules of alpha-1-microglobulin or with other proteins such as Ig alpha-1 chain C region 'Cys-352'. Post-translationally, heavy chains are interlinked with bikunin via a chondroitin 4-sulfate bridge to the C-terminal aspartate. Proteolytically cleaved by PRSS3 at Kunitz domain 2. In terms of tissue distribution, expressed by the liver and secreted in plasma.

The protein localises to the secreted. The protein resides in the endoplasmic reticulum. It localises to the cytoplasm. It is found in the cytosol. Its subcellular location is the cell membrane. The protein localises to the nucleus membrane. The protein resides in the mitochondrion inner membrane. It localises to the extracellular space. It is found in the extracellular matrix. Functionally, antioxidant and tissue repair protein with reductase, heme-binding and radical-scavenging activities. Removes and protects against harmful oxidants and repairs macromolecules in intravascular and extravascular spaces and in intracellular compartments. Intravascularly, plays a regulatory role in red cell homeostasis by preventing heme- and reactive oxygen species-induced cell damage. Binds and degrades free heme to protect fetal and adult red blood cells from hemolysis. Reduces extracellular methemoglobin, a Fe3+ (ferric) form of hemoglobin that cannot bind oxygen, back to the Fe2+ (ferrous) form deoxyhemoglobin, which has oxygen-carrying potential. Upon acute inflammation, inhibits oxidation of low-density lipoprotein particles by MPO and limits vascular damage. Extravascularly, protects from oxidation products formed on extracellular matrix structures and cell membranes. Catalyzes the reduction of carbonyl groups on oxidized collagen fibers and preserves cellular and extracellular matrix ultrastructures. Importantly, counteracts the oxidative damage at blood-placenta interface, preventing leakage of free fetal hemoglobin into the maternal circulation. Intracellularly, has a role in maintaining mitochondrial redox homeostasis. Bound to complex I of the respiratory chain of mitochondria, may scavenge free radicals and preserve mitochondrial ATP synthesis. Protects renal tubule epithelial cells from heme-induced oxidative damage to mitochondria. Reduces cytochrome c from Fe3+ (ferric) to the Fe2+ (ferrous) state through formation of superoxide anion radicals in the presence of ascorbate or NADH/NADPH electron donor cofactors, ascorbate being the preferred cofactor. Has a chaperone role in facilitating the correct folding of bikunin in the endoplasmic reticulum compartment. Its function is as follows. Kunitz-type serine protease inhibitor and structural component of extracellular matrix with a role in extracellular space remodeling and cell adhesion. Among others, has antiprotease activity toward kallikrein, a protease involved in airway inflammation; inhibits GZMK/granzyme, a granule-stored serine protease involved in NK and T cell cytotoxic responses; and inhibits PLG/plasmin, a protease required for activation of matrix metalloproteinases. As part of I-alpha-I complex, provides for the heavy chains to be transferred from I-alpha-I complex to hyaluronan in the presence of TNFAIP6, in a dynamic process that releases free bikunin and remodels extracellular matrix proteoglycan structures. Free bikunin, but not its heavy chain-bound form, acts as a potent protease inhibitor in airway secretions. Part of hyaluronan-rich extracellular matrix that surrounds oocyte during cumulus oophorus expansion, an indispensable process for proper ovulation. Also inhibits calcium oxalate crystallization. In terms of biological role, kunitz-type serine protease inhibitor. Has high catalytic efficiency for F10/blood coagulation factor Xa and may act as an anticoagulant by inhibiting prothrombin activation. Inhibits trypsin and mast cell CMA1/chymase and tryptase proteases. The chain is Protein AMBP (AMBP) from Mesocricetus auratus (Golden hamster).